Consider the following 345-residue polypeptide: Probable glucan endo-1,3-beta-glucosidase BG4 (345 aa).

The first 22 residues, 1-22, serve as a signal peptide directing secretion; that stretch reads MLYSPKKLFLFFLSCIVLYVNS. Residues Asn-23 and Asn-119 are each glycosylated (N-linked (GlcNAc...) asparagine). Catalysis depends on Glu-128, which acts as the Proton donor. Residue Glu-267 is the Nucleophile of the active site. N-linked (GlcNAc...) asparagine glycans are attached at residues Asn-277 and Asn-306.

It belongs to the glycosyl hydrolase 17 family.

The protein resides in the secreted. The catalysed reaction is Hydrolysis of (1-&gt;3)-beta-D-glucosidic linkages in (1-&gt;3)-beta-D-glucans.. Its function is as follows. May play a role in plant defense against pathogens. The polypeptide is Probable glucan endo-1,3-beta-glucosidase BG4 (Arabidopsis thaliana (Mouse-ear cress)).